Here is a 63-residue protein sequence, read N- to C-terminus: Large ribosomal subunit protein uL29 (63 aa).

It belongs to the universal ribosomal protein uL29 family.

The polypeptide is Large ribosomal subunit protein uL29 (Pseudoalteromonas translucida (strain TAC 125)).